The chain runs to 185 residues: Ribonuclease HII (185 aa).

Residues 1–185 enclose the RNase H type-2 domain; sequence MIILGIDEAG…KSYKPIQLLL (185 aa). A divalent metal cation contacts are provided by Asp-7, Glu-8, and Asp-99.

The protein belongs to the RNase HII family. It depends on Mn(2+) as a cofactor. Mg(2+) is required as a cofactor.

It localises to the cytoplasm. The enzyme catalyses Endonucleolytic cleavage to 5'-phosphomonoester.. Endonuclease that specifically degrades the RNA of RNA-DNA hybrids. This is Ribonuclease HII from Francisella tularensis subsp. novicida (strain U112).